The sequence spans 193 residues: Calcium-binding protein E63-1 (193 aa).

4 consecutive EF-hand domains span residues valine 35–asparagine 70, valine 71–leucine 106, aspartate 127–proline 162, and leucine 163–leucine 193. Residues aspartate 48, asparagine 50, aspartate 52, arginine 54, and glutamate 59 each coordinate Ca(2+). Ca(2+) contacts are provided by aspartate 140, aspartate 142, asparagine 144, glutamate 151, aspartate 176, aspartate 178, aspartate 180, arginine 182, and glutamate 187.

The protein is Calcium-binding protein E63-1 (Eip63F-1) of Drosophila melanogaster (Fruit fly).